A 66-amino-acid chain; its full sequence is U1-theraphotoxin-Cg1b (66 aa).

Residues 1–21 form the signal peptide; sequence MKTSALFVIFGLVLLFCNSFA. Positions 22 to 29 are excised as a propeptide; sequence AELKTTGR. 3 cysteine pairs are disulfide-bonded: Cys31-Cys46, Cys38-Cys51, and Cys45-Cys58.

Belongs to the neurotoxin 10 (Hwtx-1) family. 46 (Jztx-7/10/12) subfamily. In terms of tissue distribution, expressed by the venom gland.

The protein resides in the secreted. Functionally, probable ion channel inhibitor. The sequence is that of U1-theraphotoxin-Cg1b from Chilobrachys guangxiensis (Chinese earth tiger tarantula).